The sequence spans 259 residues: MSKHKLIILRHGEGQWNKENRFCSWVDQKLNNDGLEEARNCGRQLKALNFEFDLVFTSILNRSIHTAWLILEELGQEWVPVESSWRLNERHYGALIGLNREKMALNHGEEQVRLWRRSYNVTPPPIEESHPYFHEIYSDRRYKVCDVPLDQLPRSESLKDVLERLLPYWKERIAPEILKGKSILISAHGNSSRALLKHLEGISDEDIINITLPTGVPILLELDENLRAVGPHQFLGNQEAIQAAIKKVDDQGKVKQGKQ.

S2 carries the post-translational modification N-acetylserine. Substrate-binding positions include R10 to N17, C23 to S24, R62, E89 to Y92, R100, and R116 to R117. The Tele-phosphohistidine intermediate role is filled by H11. E89 functions as the Proton donor/acceptor in the catalytic mechanism. Phosphothreonine is present on T122. G189–N190 serves as a coordination point for substrate.

Belongs to the phosphoglycerate mutase family. BPG-dependent PGAM subfamily. As to quaternary structure, homodimer. As to expression, expressed in red blood cells. Expressed in placenta (labyrinthine trophoblasts).

It catalyses the reaction (2R)-3-phospho-glyceroyl phosphate = (2R)-2,3-bisphosphoglycerate + H(+). The catalysed reaction is (2R)-2-phosphoglycerate = (2R)-3-phosphoglycerate. At alkaline pH BPGM favors the synthase reaction; however, at lower pH the phosphatase reaction is dominant. Inhibited by citrate. In terms of biological role, plays a major role in regulating hemoglobin oxygen affinity by controlling the levels of its allosteric effector 2,3-bisphosphoglycerate (2,3-BPG). Also exhibits mutase (EC 5.4.2.11) activity. The chain is Bisphosphoglycerate mutase (Bpgm) from Mus musculus (Mouse).